The sequence spans 55 residues: MAKSSREKIKLISSSGSKHYYTTTKNKKAPSKKIELKKYDPKIRKHVLYKEAKIK.

Belongs to the bacterial ribosomal protein bL33 family.

The protein is Large ribosomal subunit protein bL33 of Buchnera aphidicola subsp. Baizongia pistaciae (strain Bp).